Reading from the N-terminus, the 177-residue chain is Large ribosomal subunit protein uL6 (177 aa).

The protein belongs to the universal ribosomal protein uL6 family. As to quaternary structure, part of the 50S ribosomal subunit.

This protein binds to the 23S rRNA, and is important in its secondary structure. It is located near the subunit interface in the base of the L7/L12 stalk, and near the tRNA binding site of the peptidyltransferase center. The chain is Large ribosomal subunit protein uL6 from Pseudomonas putida (strain ATCC 700007 / DSM 6899 / JCM 31910 / BCRC 17059 / LMG 24140 / F1).